The sequence spans 206 residues: Putative 3-methyladenine DNA glycosylase (206 aa).

It belongs to the DNA glycosylase MPG family.

In Staphylococcus carnosus (strain TM300), this protein is Putative 3-methyladenine DNA glycosylase.